The following is a 271-amino-acid chain: Methyltransferase psoC (271 aa).

Belongs to the methyltransferase superfamily. LaeA methyltransferase family.

The protein operates within secondary metabolite biosynthesis. In terms of biological role, methyltransferase; part of the gene cluster that mediates the biosynthesis of pseurotin A, a competitive inhibitor of chitin synthase and an inducer of nerve-cell proliferation. The PKS-NRPS hybrid synthetase psoA is responsible for the biosynthesis of azaspirene, one of the first intermediates having the 1-oxa-7-azaspiro[4,4]-non-2-ene-4,6-dione core of pseurotin, via condensation of one acetyl-CoA, 4 malonyl-CoA, and a L-phenylalanine molecule. The dual-functional monooxygenase/methyltransferase psoF seems to be involved in the addition of the C3 methyl group onto the pseurotin scaffold. Azaspirene is then converted to synerazol through 4 steps including oxidation of C17 by the cytochrome P450 monooxygenase psoD, O-methylation of the hydroxy group of C8 by the methyltransferase psoC, and the trans-to-cis isomerization of the C13 olefin by the glutathione S-transferase psoE. The fourth step of synerazol production is performed by the dual-functional monooxygenase/methyltransferase psoF which seems to catalyze the epoxidation of the intermediate deepoxy-synerazol. Synerazol can be attacked by a water molecule nonenzymatically at two different positions to yield two diol products, pseurotin A and pseurotin D. The polypeptide is Methyltransferase psoC (Aspergillus fumigatus (strain ATCC MYA-4609 / CBS 101355 / FGSC A1100 / Af293) (Neosartorya fumigata)).